Consider the following 797-residue polypeptide: Calcium-transporting ATPase CtpE (797 aa).

The next 3 helical transmembrane spans lie at 55-75 (LLLI…LLII), 215-235 (ILQF…YTQL), and 254-274 (VPMV…VGVV). The 4-aspartylphosphate intermediate role is filled by Asp301. Positions 301, 303, and 536 each coordinate Mg(2+). Helical transmembrane passes span 601 to 621 (TVYS…AIPL), 633 to 653 (IHVT…LSLA), 667 to 687 (VMTS…VTYL), 703 to 723 (ASTA…AVIA), 729 to 749 (WRLA…SLPL), and 764 to 784 (TSIA…MWWI).

The protein belongs to the cation transport ATPase (P-type) (TC 3.A.3) family.

It is found in the cell membrane. The enzyme catalyses Ca(2+)(in) + ATP + H2O = Ca(2+)(out) + ADP + phosphate + H(+). Its function is as follows. P-type ATPase involved in specific uptake of calcium. This Mycobacterium tuberculosis (strain CDC 1551 / Oshkosh) protein is Calcium-transporting ATPase CtpE (ctpE).